The sequence spans 236 residues: Cyclin-P3-1 (236 aa).

The protein belongs to the cyclin family. Cyclin U/P subfamily.

The chain is Cyclin-P3-1 (CYCP3-1) from Oryza sativa subsp. japonica (Rice).